The primary structure comprises 345 residues: Protein GAMETE CELL DEFECTIVE 1, mitochondrial (345 aa).

A mitochondrion-targeting transit peptide spans 1–43 (MLALRKTLLHGRLPAAPPAAAAAAIASRIPALLRRLSSSPGDG). The interval 36–82 (LSSSPGDGQGGDEWGSSWSTGITKEHFDGSDAAVGRPVTSPSKPVSP) is disordered.

It is found in the mitochondrion. Functionally, essential for fertility (male and female gametophyte functions and development). Required for the integrity of female gametic mitochondria. Involved in embryo apical-basal patterning, and particularly dorsal-ventral patterning, during early embryogenesis, and endosperm free nucleus positioning and development as well as early endosperm development, probably by modulating the expression pattern of related genes (e.g. AL1, MYB3/AL2, CYP78A13/GE, PNH1, HAZ1, MPK6 and OSH1). Has function in triggering of endosperm programmed cell death (PCD) leading to syncytial endosperm cellularization and starchy endosperm cell maturation. Implicated in central vacuole dynamics necessary for microspore development leading to pollen production, and for pollen development and germination. The polypeptide is Protein GAMETE CELL DEFECTIVE 1, mitochondrial (Oryza sativa subsp. indica (Rice)).